The following is a 641-amino-acid chain: Pre-mRNA-processing factor 39 (641 aa).

Residues 1–50 (MEKSPEHCAEGSPSPATESAPSATEPPLPSTEPPLPSTEPPLPSTEPPLP) are disordered. The span at 10–23 (EGSPSPATESAPSA) shows a compositional bias: low complexity. The segment covering 24 to 50 (TEPPLPSTEPPLPSTEPPLPSTEPPLP) has biased composition (pro residues). 7 HAT repeats span residues 50–82 (PPLP…YVEQ), 84–116 (NHLF…LEKK), 118–150 (NNIL…FLKE), 158–193 (ETSL…WETE), 304–336 (NFEE…FELE), 338–370 (GSNE…YMEN), and 372–407 (SVEG…QQGN).

The protein belongs to the PRP39 family.

The protein localises to the nucleus. Involved in pre-mRNA splicing. The polypeptide is Pre-mRNA-processing factor 39 (prpf39) (Xenopus laevis (African clawed frog)).